A 1391-amino-acid polypeptide reads, in one-letter code: MSQKPSFFQKKYSPTATRRYYGKIATDFVQPNLADIQIRSYQTFLDHDLENLIAAYFPIKSPNDRYTINFKGLRRTAPERNEAQSRSESKTYEIGIYADLELIDSATGTIKKPRKSKKNSATSSVDGVFLTNLPLITRDGVFIVNGIEKFVIAQITRSPGIYMLTKSQLKLSSSRKRVQEGYVCEVLPANGSVMLIYISNKKKIEDAFVQILLRDAVREGAKIFPITTLLKAFGMSGKEILKVFKNNEFITRSLEAEVYNAKDFLNNVDPEIKNLLREFRDGKTDLRRKGIASDQKIRSLVSDYVLLEKEHKALSEAKPNDPKVGQLEADMDELMDKIITERAAKHIVHELSISLRGLENTDECPENSYHALLCSRFFRQRRYNLSAAGRYKVSRKLRITERIYQKTLACDLHLKNGELLLKKGTLLVKEEIDKIKQAAQNNQIDFVQKIKLTTDGSAVNLSPESLLYESLDVYVNNDNFDVSVPVVGIHNDNDLNKAITLSDFIASISYVINIPSAIGKYDDIDHLGNKRVKLINELISSRLESGITRMERFLKEKLTIADGVNRGQQINEEGQVIEQAEKKELTIKSLINSKPIQIVIRDFFNTHQLTQFLDHQNPLSELSNKRRISAMGPGGISREDPNLDIRDVHYSQYGRICPIETPEGMNIGLIMSLASFAKIDENGFLMAPYRKIKNGVITDEVEYLTALREDEHIIAEISSLVNIDENNKILDKEIIGRYRSMQGLYDPSKIDYIDVAPHQVVSIGSSLIPFLENDDSARALMGTNMQRQAYPLIKPYAPVVGTGQEYKIARDSGLTMLAPCSGTVKYVDNSKITIESDSGEQHTLDLIKFERSNQNTCYNHVPLVEKGQRVTKDEVIADGPAVNKSELSLGQNVLVAFTTWNGYNYEDAIVISERLVKDDVLTSLTINEYVAQCLSTKNGDEQITRDIPNVSDANKRYLDENGIIMVGAEVKEGDVLVGKVSPKGQVEVSPEEKLFKAIFPESVQNVRDSSLKLPHGGDGIVSCVKRFSIANGNELNDGVIEMIKVYVVQKRKIQIGDKLAGRHGNKGVISKVVPVADMPHLEDGTPVDILLNPLGVPSRMNIGQIFEMHLGYAAHNLAKRMLISACFDDKKAQALSTEINQPQYKLDRLITGLKAQITNRGLKDEQAALAQLNNGDIALVLKEIGMSFDDLHFKVATPIFQGVNFQDLQDIMDEAGLKPAETHGKFKLIDGRTGLPFEKPISLGIMYIMKLNHMVDDKIHARAVGPYSKITQQPLGGKSQNGGQRFGEMEVWALEAYGAAYNLQELLTIKSDDVQGRNKAYAAIVKGAAFPEPGIPESFKLLTKELQGLALSVSFIYDDNTQQDSNNVSILQADGEQDDLFNDFEFDTEGY.

It belongs to the RNA polymerase beta chain family. The RNAP catalytic core consists of 2 alpha, 1 beta, 1 beta' and 1 omega subunit. When a sigma factor is associated with the core the holoenzyme is formed, which can initiate transcription.

The enzyme catalyses RNA(n) + a ribonucleoside 5'-triphosphate = RNA(n+1) + diphosphate. Its function is as follows. DNA-dependent RNA polymerase catalyzes the transcription of DNA into RNA using the four ribonucleoside triphosphates as substrates. The chain is DNA-directed RNA polymerase subunit beta from Mycoplasma pneumoniae (strain ATCC 29342 / M129 / Subtype 1) (Mycoplasmoides pneumoniae).